Here is a 176-residue protein sequence, read N- to C-terminus: Disulfide bond formation protein B (176 aa).

Topologically, residues 1 to 14 (MLRFLNQCSQGRGA) are cytoplasmic. The helical transmembrane segment at 15-31 (WLLMAFTALALELTALW) threads the bilayer. Topologically, residues 32 to 49 (FQHVMLLKPCVLCIYERC) are periplasmic. Cys-41 and Cys-44 are disulfide-bonded. Residues 50–65 (ALFGVLGAALIGAIAP) traverse the membrane as a helical segment. The Cytoplasmic segment spans residues 66–71 (KTPLRY). Residues 72-89 (VAMVIWLYSAFRGVQLTY) traverse the membrane as a helical segment. Topologically, residues 90 to 144 (EHTMLQLYPSPFATCDFMVRFPEWLPLDKWVPQVFVASGDCAERQWDFLGLEMPQ) are periplasmic. Cysteines 104 and 130 form a disulfide. Residues 145–163 (WLLGIFIAYLIVAVLVMIS) traverse the membrane as a helical segment. Residues 164–176 (QPFKAKKRDLFGR) are Cytoplasmic-facing.

Belongs to the DsbB family.

It localises to the cell inner membrane. Functionally, required for disulfide bond formation in some periplasmic proteins. Acts by oxidizing the DsbA protein. This Shigella sonnei (strain Ss046) protein is Disulfide bond formation protein B.